Reading from the N-terminus, the 470-residue chain is mRNA export factor ICP27 homolog (470 aa).

Disordered regions lie at residues methionine 1–aspartate 31 and valine 62–asparagine 204. Residues valine 71 to proline 85 are compositionally biased toward polar residues. Composition is skewed to basic residues over residues histidine 94–asparagine 107 and arginine 178–asparagine 187. 4 residues coordinate Zn(2+): cysteine 359, histidine 437, cysteine 441, and cysteine 446. The CHC2-type zinc-finger motif lies at cysteine 359–cysteine 446.

Belongs to the HHV-1 ICP27 protein family. In terms of assembly, homodimer. Homodimerization is required for transactivation. Associates in a complex with RNA, and host export factors NXF1/TAP and ALYREF; these interactions allow nuclear export of viral transcripts. Interacts with three host shuttling SR proteins SRSF1, SRSF3 and SRSF7. Interacts with host SRPK1. Interacts with IE62; this interaction enhances IE62 transactivation.

The protein localises to the host cytoplasm. The protein resides in the host nucleus. Its function is as follows. Multifunctional regulator of the expression of viral genes that mediates nuclear export of viral intronless mRNAs. This immediate early (EI) protein promotes the nuclear export of viral intronless mRNAs by interacting with mRNAs and host NXF1/TAP. The sequence is that of mRNA export factor ICP27 homolog from Equine herpesvirus 1 (strain Ab4p) (EHV-1).